The chain runs to 300 residues: Protoheme IX farnesyltransferase (300 aa).

9 helical membrane passes run glycine 24–phenylalanine 44, leucine 46–serine 66, alanine 99–proline 119, alanine 122–valine 142, leucine 145–alanine 165, leucine 176–phenylalanine 196, isoleucine 220–glycine 240, leucine 244–isoleucine 264, and alanine 275–leucine 295.

Belongs to the UbiA prenyltransferase family. Protoheme IX farnesyltransferase subfamily.

The protein localises to the cell inner membrane. It catalyses the reaction heme b + (2E,6E)-farnesyl diphosphate + H2O = Fe(II)-heme o + diphosphate. The protein operates within porphyrin-containing compound metabolism; heme O biosynthesis; heme O from protoheme: step 1/1. Converts heme B (protoheme IX) to heme O by substitution of the vinyl group on carbon 2 of heme B porphyrin ring with a hydroxyethyl farnesyl side group. In Flavobacterium psychrophilum (strain ATCC 49511 / DSM 21280 / CIP 103535 / JIP02/86), this protein is Protoheme IX farnesyltransferase.